We begin with the raw amino-acid sequence, 431 residues long: Elongation factor 1-gamma (431 aa).

The region spanning 2–84 (VKGTLYTYPE…LLANEQLRGG (83 aa)) is the GST N-terminal domain. The GST C-terminal domain occupies 86-212 (CPFVQAQVQQ…YKLCEKALVF (127 aa)). Residues 223–261 (KTGAAKPQQQAQQQKQEKKPKEKKEAPKKAAEPAEELDA) form a disordered region. Residues 226-236 (AAKPQQQAQQQ) are compositionally biased toward low complexity. The span at 237–254 (KQEKKPKEKKEAPKKAAE) shows a compositional bias: basic and acidic residues. The region spanning 272–431 (SKDPFDALPK…RKFNQGKIFK (160 aa)) is the EF-1-gamma C-terminal domain. S294 carries the phosphoserine modification.

In terms of assembly, interacts with microtubules. May interact with BicDR; the interaction is probably indirect. Interacts (via C-terminus) with Doa; the interaction is probably direct, is transient and leads to phosphorylation of eEF1gamma by Doa. EF-1 is composed of four subunits: alpha, beta, delta, and gamma. Post-translationally, phosphorylated on Ser-294 by LAMMER kinases, including Doa. Phosphorylation on Ser-294 by Doa is required for negative regulation of microtubule-based transport.

Its subcellular location is the cytoplasm. The protein resides in the nucleus. It is found in the cytoskeleton. Its function is as follows. Microtubule binding protein involved in regulation of microtubule-based transport. Probably plays a role in anchoring the EF-1 complex to other cellular components. Probably involved in formation and/or development of mechanosensory organs during metamorphosis. Required for cellular and organismal viability. Not essential for the innate immune response to bacterial infection. This Drosophila melanogaster (Fruit fly) protein is Elongation factor 1-gamma.